We begin with the raw amino-acid sequence, 190 residues long: Vascular endothelial growth factor A (190 aa).

An N-terminal signal peptide occupies residues M1–A26. Intrachain disulfides connect C51/C93, C82/C127, and C86/C129. N-linked (GlcNAc...) asparagine glycosylation is present at N100.

Belongs to the PDGF/VEGF growth factor family. As to quaternary structure, homodimer; disulfide-linked. Also found as heterodimer with PGF. Interacts with NRP1. Interacts with BSG. Interacts with CD82; this interaction inhibits VEGFA-mediated signaling pathway.

Its subcellular location is the secreted. Its function is as follows. Growth factor active in angiogenesis, vasculogenesis and endothelial cell growth. Induces endothelial cell proliferation, promotes cell migration, inhibits apoptosis and induces permeabilization of blood vessels. Binds to the FLT1/VEGFR1 and KDR/VEGFR2 receptors, heparan sulfate and heparin. Binding to NRP1 receptor initiates a signaling pathway needed for motor neuron axon guidance and cell body migration, including for the caudal migration of facial motor neurons from rhombomere 4 to rhombomere 6 during embryonic development. Also binds the DEAR/FBXW7-AS1 receptor. The chain is Vascular endothelial growth factor A (VEGFA) from Bos taurus (Bovine).